The chain runs to 56 residues: Large ribosomal subunit protein bL32 (56 aa).

The interval 1-27 (MAVQQNKKSRSRRDMRRSHDALTTAAV) is disordered. Basic residues predominate over residues 7-16 (KKSRSRRDMR).

The protein belongs to the bacterial ribosomal protein bL32 family.

In Actinobacillus pleuropneumoniae serotype 7 (strain AP76), this protein is Large ribosomal subunit protein bL32.